The primary structure comprises 254 residues: Imidazole glycerol phosphate synthase subunit HisF (254 aa).

Active-site residues include Asp12 and Asp131.

Belongs to the HisA/HisF family. In terms of assembly, heterodimer of HisH and HisF.

It localises to the cytoplasm. It catalyses the reaction 5-[(5-phospho-1-deoxy-D-ribulos-1-ylimino)methylamino]-1-(5-phospho-beta-D-ribosyl)imidazole-4-carboxamide + L-glutamine = D-erythro-1-(imidazol-4-yl)glycerol 3-phosphate + 5-amino-1-(5-phospho-beta-D-ribosyl)imidazole-4-carboxamide + L-glutamate + H(+). Its pathway is amino-acid biosynthesis; L-histidine biosynthesis; L-histidine from 5-phospho-alpha-D-ribose 1-diphosphate: step 5/9. Functionally, IGPS catalyzes the conversion of PRFAR and glutamine to IGP, AICAR and glutamate. The HisF subunit catalyzes the cyclization activity that produces IGP and AICAR from PRFAR using the ammonia provided by the HisH subunit. This Rhizorhabdus wittichii (strain DSM 6014 / CCUG 31198 / JCM 15750 / NBRC 105917 / EY 4224 / RW1) (Sphingomonas wittichii) protein is Imidazole glycerol phosphate synthase subunit HisF.